We begin with the raw amino-acid sequence, 257 residues long: 1-(5-phosphoribosyl)-5-[(5-phosphoribosylamino)methylideneamino] imidazole-4-carboxamide isomerase (257 aa).

Asp-8 functions as the Proton acceptor in the catalytic mechanism. Asp-129 functions as the Proton donor in the catalytic mechanism.

The protein belongs to the HisA/HisF family.

It is found in the cytoplasm. The catalysed reaction is 1-(5-phospho-beta-D-ribosyl)-5-[(5-phospho-beta-D-ribosylamino)methylideneamino]imidazole-4-carboxamide = 5-[(5-phospho-1-deoxy-D-ribulos-1-ylimino)methylamino]-1-(5-phospho-beta-D-ribosyl)imidazole-4-carboxamide. The protein operates within amino-acid biosynthesis; L-histidine biosynthesis; L-histidine from 5-phospho-alpha-D-ribose 1-diphosphate: step 4/9. This chain is 1-(5-phosphoribosyl)-5-[(5-phosphoribosylamino)methylideneamino] imidazole-4-carboxamide isomerase, found in Nostoc punctiforme (strain ATCC 29133 / PCC 73102).